The primary structure comprises 486 residues: Putative protease Do-like 13 (486 aa).

The segment at 44–229 (KINTFSSKPN…IPAPVVKHFI (186 aa)) is serine protease. Active-site charge relay system residues include His83, Asp114, and Ser192. A PDZ domain is found at 241-334 (FCSLNLSYQH…TILLKILREG (94 aa)).

It belongs to the peptidase S1C family.

Its function is as follows. Putative serine protease. The sequence is that of Putative protease Do-like 13 (DEGP13) from Arabidopsis thaliana (Mouse-ear cress).